The chain runs to 213 residues: Agglutinin isolectin 2 (213 aa).

Residues Met-1–Ala-27 form the signal peptide. Gln-28 carries the pyrrolidone carboxylic acid modification. Chitin-binding type-1 domains follow at residues Gln-28–Thr-69, Ser-70–Ala-112, Asp-113–Thr-155, and Asp-156–Ala-198. Intrachain disulfides connect Cys-30–Cys-45, Cys-39–Cys-51, Cys-44–Cys-58, Cys-62–Cys-67, Cys-73–Cys-88, Cys-82–Cys-94, Cys-87–Cys-101, Cys-105–Cys-110, Cys-116–Cys-131, Cys-125–Cys-137, Cys-130–Cys-144, Cys-148–Cys-153, Cys-159–Cys-174, Cys-168–Cys-180, Cys-173–Cys-187, and Cys-191–Cys-196. Met-37–Cys-39 provides a ligand contact to substrate. Residue Ser-89 to Tyr-100 participates in substrate binding. Substrate is bound at residue Ser-141 to Glu-142. The propeptide occupies Val-199–Glu-213.

Homodimer, u-shaped.

Functionally, N-acetyl-D-glucosamine / N-acetyl-D-neuraminic acid binding lectin. The chain is Agglutinin isolectin 2 from Triticum aestivum (Wheat).